Here is a 225-residue protein sequence, read N- to C-terminus: 7-carboxy-7-deazaguanine synthase (225 aa).

Substrate-binding positions include 12-14 and arginine 27; that span reads IQG. Residues 18–225 form the Radical SAM core domain; the sequence is YIGVRQLFVR…PQVHKYLGVR (208 aa). Residues cysteine 31, cysteine 35, and cysteine 38 each contribute to the [4Fe-4S] cluster site. Position 40 (threonine 40) interacts with Mg(2+). Residue threonine 80 coordinates substrate. An S-adenosyl-L-methionine-binding site is contributed by glycine 82.

The protein belongs to the radical SAM superfamily. 7-carboxy-7-deazaguanine synthase family. In terms of assembly, homodimer. The cofactor is [4Fe-4S] cluster. It depends on S-adenosyl-L-methionine as a cofactor. Requires Mg(2+) as cofactor.

The catalysed reaction is 6-carboxy-5,6,7,8-tetrahydropterin + H(+) = 7-carboxy-7-deazaguanine + NH4(+). Its pathway is purine metabolism; 7-cyano-7-deazaguanine biosynthesis. In terms of biological role, catalyzes the complex heterocyclic radical-mediated conversion of 6-carboxy-5,6,7,8-tetrahydropterin (CPH4) to 7-carboxy-7-deazaguanine (CDG), a step common to the biosynthetic pathways of all 7-deazapurine-containing compounds. This is 7-carboxy-7-deazaguanine synthase from Archaeoglobus fulgidus (strain ATCC 49558 / DSM 4304 / JCM 9628 / NBRC 100126 / VC-16).